The chain runs to 501 residues: Probable cytosol aminopeptidase (501 aa).

Mn(2+) is bound by residues Lys270 and Asp275. Residue Lys282 is part of the active site. 3 residues coordinate Mn(2+): Asp293, Asp352, and Glu354. Arg356 is a catalytic residue.

This sequence belongs to the peptidase M17 family. Mn(2+) is required as a cofactor.

Its subcellular location is the cytoplasm. It catalyses the reaction Release of an N-terminal amino acid, Xaa-|-Yaa-, in which Xaa is preferably Leu, but may be other amino acids including Pro although not Arg or Lys, and Yaa may be Pro. Amino acid amides and methyl esters are also readily hydrolyzed, but rates on arylamides are exceedingly low.. The catalysed reaction is Release of an N-terminal amino acid, preferentially leucine, but not glutamic or aspartic acids.. In terms of biological role, presumably involved in the processing and regular turnover of intracellular proteins. Catalyzes the removal of unsubstituted N-terminal amino acids from various peptides. The polypeptide is Probable cytosol aminopeptidase (Wigglesworthia glossinidia brevipalpis).